We begin with the raw amino-acid sequence, 300 residues long: Phosphatidylserine decarboxylase proenzyme (300 aa).

Active-site charge relay system; for autoendoproteolytic cleavage activity residues include D117, H173, and S260. S260 acts as the Schiff-base intermediate with substrate; via pyruvic acid; for decarboxylase activity in catalysis. S260 is modified (pyruvic acid (Ser); by autocatalysis).

It belongs to the phosphatidylserine decarboxylase family. PSD-B subfamily. Prokaryotic type II sub-subfamily. Heterodimer of a large membrane-associated beta subunit and a small pyruvoyl-containing alpha subunit. Pyruvate serves as cofactor. Post-translationally, is synthesized initially as an inactive proenzyme. Formation of the active enzyme involves a self-maturation process in which the active site pyruvoyl group is generated from an internal serine residue via an autocatalytic post-translational modification. Two non-identical subunits are generated from the proenzyme in this reaction, and the pyruvate is formed at the N-terminus of the alpha chain, which is derived from the carboxyl end of the proenzyme. The autoendoproteolytic cleavage occurs by a canonical serine protease mechanism, in which the side chain hydroxyl group of the serine supplies its oxygen atom to form the C-terminus of the beta chain, while the remainder of the serine residue undergoes an oxidative deamination to produce ammonia and the pyruvoyl prosthetic group on the alpha chain. During this reaction, the Ser that is part of the protease active site of the proenzyme becomes the pyruvoyl prosthetic group, which constitutes an essential element of the active site of the mature decarboxylase.

The protein localises to the cell membrane. The enzyme catalyses a 1,2-diacyl-sn-glycero-3-phospho-L-serine + H(+) = a 1,2-diacyl-sn-glycero-3-phosphoethanolamine + CO2. It functions in the pathway phospholipid metabolism; phosphatidylethanolamine biosynthesis; phosphatidylethanolamine from CDP-diacylglycerol: step 2/2. Functionally, catalyzes the formation of phosphatidylethanolamine (PtdEtn) from phosphatidylserine (PtdSer). This Fusobacterium nucleatum subsp. nucleatum (strain ATCC 25586 / DSM 15643 / BCRC 10681 / CIP 101130 / JCM 8532 / KCTC 2640 / LMG 13131 / VPI 4355) protein is Phosphatidylserine decarboxylase proenzyme.